The sequence spans 232 residues: 5'-methylthioadenosine/S-adenosylhomocysteine nucleosidase (232 aa).

Glu12 serves as the catalytic Proton acceptor. Residues Gly78, Ile152, and 173–174 (ME) each bind substrate. Residue Asp197 is the Proton donor of the active site.

It belongs to the PNP/UDP phosphorylase family. MtnN subfamily. In terms of assembly, homodimer.

The catalysed reaction is S-adenosyl-L-homocysteine + H2O = S-(5-deoxy-D-ribos-5-yl)-L-homocysteine + adenine. The enzyme catalyses S-methyl-5'-thioadenosine + H2O = 5-(methylsulfanyl)-D-ribose + adenine. It carries out the reaction 5'-deoxyadenosine + H2O = 5-deoxy-D-ribose + adenine. Its pathway is amino-acid biosynthesis; L-methionine biosynthesis via salvage pathway; S-methyl-5-thio-alpha-D-ribose 1-phosphate from S-methyl-5'-thioadenosine (hydrolase route): step 1/2. Its function is as follows. Catalyzes the irreversible cleavage of the glycosidic bond in both 5'-methylthioadenosine (MTA) and S-adenosylhomocysteine (SAH/AdoHcy) to adenine and the corresponding thioribose, 5'-methylthioribose and S-ribosylhomocysteine, respectively. Also cleaves 5'-deoxyadenosine, a toxic by-product of radical S-adenosylmethionine (SAM) enzymes, into 5-deoxyribose and adenine. Thus, is required for in vivo function of the radical SAM enzymes biotin synthase and lipoic acid synthase, that are inhibited by 5'-deoxyadenosine accumulation. This is 5'-methylthioadenosine/S-adenosylhomocysteine nucleosidase from Salmonella dublin (strain CT_02021853).